The sequence spans 101 residues: Small ribosomal subunit protein uS10 (101 aa).

This sequence belongs to the universal ribosomal protein uS10 family. As to quaternary structure, part of the 30S ribosomal subunit.

Functionally, involved in the binding of tRNA to the ribosomes. This chain is Small ribosomal subunit protein uS10, found in Mycoplasmopsis synoviae (strain 53) (Mycoplasma synoviae).